The primary structure comprises 486 residues: MKKIEIEPMTRLEGHGKIAIFLDDKGNVADAFYQIVEFRGYETFLRGLPIEEVPRTVSTICGVCRAVHHTASTKASDGVYGVEPTETAKKIRELYLNAHYVEDHCAILYALGLPDFVVGIEADPAERNLVGLIKKVGVDVGKTVLKKRFAAVKVLEMLGGKPIHPVAGLPGGWSKRITEDERKEIEALAKEMVELGELTLQVFEDVILKNEKLLELITADYYRVVVNYLGTVDDAGKVNYYDGWQVGIDTKGNEVFRFKGKDYLNYIAERVVPWSYVKMPYFKQLGWKGFVDGEGTSLYSVGPLARCNIGDMNTPKAKEAQEKMFDVLKERPIHYIMAYHWARAVELLNAAERVLELAQDPEITSPDVRAELGEVTGEGVGIIEAPRGTLIHHYKTDENGIVTDANLIVATTHNHAPINIAIKKAAQHFIQENKEINDKLLNYVEIAYRPYDICQACASHALPGRYPLEVLVYDSEGELIKTIRNF.

Residues C61 and C64 each coordinate Ni(2+).

This sequence belongs to the [NiFe]/[NiFeSe] hydrogenase large subunit family. As to quaternary structure, the F420-non-reducing hydrogenase is composed of three subunits; MvhA, MvhD and MvhG. It forms a complex with the heterodisulfide reductase (Hdr). Ni(2+) serves as cofactor.

Its subcellular location is the cytoplasm. Its function is as follows. Part of a complex that provides reducing equivalents for heterodisulfide reductase. The chain is F420-non-reducing hydrogenase iron-sulfur subunit A (mvhA) from Archaeoglobus profundus (strain DSM 5631 / JCM 9629 / NBRC 100127 / Av18).